Consider the following 347-residue polypeptide: FK506-binding protein-like (347 aa).

The tract at residues 1–24 (METSPISPMNEKNTAQPQQREENA) is disordered. A Phosphothreonine modification is found at threonine 3. TPR repeat units lie at residues 208–241 (AKEEHRRGTELFRAGNPQGAARCYGRALRLLLTL), 250–283 (TTLYANLAACQLLLGHPQLAAQSCDRVLEREPGH), and 284–317 (LKALYRRGVARAALGDLEKATADFKKVLAVDPKN).

In terms of assembly, forms a ternary complex with CDKN1A/p21 and HSP90AB1/Hsp90.

In terms of biological role, may be involved in response to X-ray. Regulates p21 protein stability by binding to Hsp90 and p21. This Mus musculus (Mouse) protein is FK506-binding protein-like (Fkbpl).